Consider the following 1416-residue polypeptide: DNA-directed RNA polymerase subunit beta' (1416 aa).

Zn(2+) contacts are provided by cysteine 71, cysteine 73, cysteine 86, and cysteine 89. Residues aspartate 461, aspartate 463, and aspartate 465 each coordinate Mg(2+). Zn(2+)-binding residues include cysteine 815, cysteine 892, cysteine 899, and cysteine 902.

The protein belongs to the RNA polymerase beta' chain family. As to quaternary structure, the RNAP catalytic core consists of 2 alpha, 1 beta, 1 beta' and 1 omega subunit. When a sigma factor is associated with the core the holoenzyme is formed, which can initiate transcription. Mg(2+) is required as a cofactor. The cofactor is Zn(2+).

The catalysed reaction is RNA(n) + a ribonucleoside 5'-triphosphate = RNA(n+1) + diphosphate. DNA-dependent RNA polymerase catalyzes the transcription of DNA into RNA using the four ribonucleoside triphosphates as substrates. This Blochmanniella pennsylvanica (strain BPEN) protein is DNA-directed RNA polymerase subunit beta'.